The chain runs to 307 residues: Acyl transferase (307 aa).

Residues serine 116, aspartate 213, and histidine 243 each act as charge relay system in the active site.

This sequence belongs to the LuxD family.

It functions in the pathway lipid metabolism; fatty acid reduction for biolumincescence. In terms of biological role, acyl transferase is part of the fatty acid reductase system required for aldehyde biosynthesis; it produces fatty acids for the luminescent reaction. The sequence is that of Acyl transferase from Aliivibrio fischeri (strain ATCC 700601 / ES114) (Vibrio fischeri).